A 630-amino-acid polypeptide reads, in one-letter code: Elongation factor 4 (630 aa).

The interval 1–22 (MTVARNRAGAGPGKGSPISSFA) is disordered. In terms of domain architecture, tr-type G spans 30 to 211 (ARIRNFCIIA…EVVRQVPAPV (182 aa)). Residues 42 to 47 (DHGKST) and 158 to 161 (NKID) contribute to the GTP site.

The protein belongs to the TRAFAC class translation factor GTPase superfamily. Classic translation factor GTPase family. LepA subfamily.

It localises to the cell membrane. The catalysed reaction is GTP + H2O = GDP + phosphate + H(+). Its function is as follows. Required for accurate and efficient protein synthesis under certain stress conditions. May act as a fidelity factor of the translation reaction, by catalyzing a one-codon backward translocation of tRNAs on improperly translocated ribosomes. Back-translocation proceeds from a post-translocation (POST) complex to a pre-translocation (PRE) complex, thus giving elongation factor G a second chance to translocate the tRNAs correctly. Binds to ribosomes in a GTP-dependent manner. The protein is Elongation factor 4 of Rhodococcus opacus (strain B4).